Here is a 381-residue protein sequence, read N- to C-terminus: Layilin (381 aa).

The N-terminal stretch at 1–24 (MQPGAALQAMLLAVLLAKPRDSKG) is a signal peptide. Over 25–235 (RLLSASDLDP…ERREAALNLA (211 aa)) the chain is Extracellular. The region spanning 45-185 (TRRPCYKVIY…CNMKNNFICK (141 aa)) is the C-type lectin domain. Disulfide bonds link cysteine 71-cysteine 184 and cysteine 150-cysteine 176. The N-linked (GlcNAc...) asparagine glycan is linked to asparagine 117. A helical membrane pass occupies residues 236–256 (YILIPSIPLFLLLVVTSAVCW). The Cytoplasmic portion of the chain corresponds to 257–381 (VWICRRKREQ…SGWVENEIYY (125 aa)). A phosphoserine mark is found at serine 286 and serine 299. Residues 330-374 (DYENIAVNPSESGFVTLASMESGFVTNDIYEFSPDRMGRSKESGW) are interaction with NF2. The interaction with TLN1 stretch occupies residues 337-381 (NPSESGFVTLASMESGFVTNDIYEFSPDRMGRSKESGWVENEIYY). Tandem repeats lie at residues 340–344 (ESGFV), 350–354 (ESGFV), 356–359 (NDIY), 371–375 (ESGWV), and 377–380 (NEIY). The 3 X 5 AA repeats of E-S-G-X-V stretch occupies residues 340–375 (ESGFVTLASMESGFVTNDIYEFSPDRMGRSKESGWV). The segment at 356 to 380 (NDIYEFSPDRMGRSKESGWVENEIY) is 2 X 4 AA repeats of N-X-I-Y.

In terms of assembly, interacts with TLN1. Interacts with NF2 and RDX.

Its subcellular location is the membrane. Its function is as follows. Receptor for hyaluronate. This chain is Layilin (Layn), found in Mus musculus (Mouse).